The primary structure comprises 263 residues: MKPTTISLLQKCKQEKKRFATITAYDFSFAKLFAEEGINVMLVGDSLGMTVQGHDSTLPVTVDDIAYHTRAVRRGAPHCLLLSDLPFMAYATPEQAFENAAAVMRAGANMVKIEGGAWLVDTVKMLTERAVPVCGHLGLTPQSVNVFGGYKVQGRGDAGQILLDDALALEAAGIQLLVLECVPVELAKRVTDALTIPVIGIGAGNVTDGQILVMHDAFGITGGHIPKFAKNFLSEAGDMRAAVRQYIADVESGVYPGEEHSFH.

Residues Asp-45 and Asp-84 each coordinate Mg(2+). Residues 45–46, Asp-84, and Lys-112 contribute to the 3-methyl-2-oxobutanoate site; that span reads DS. Residue Glu-114 coordinates Mg(2+). Glu-180 functions as the Proton acceptor in the catalytic mechanism.

It belongs to the PanB family. Homodecamer; pentamer of dimers. The cofactor is Mg(2+).

It localises to the cytoplasm. The enzyme catalyses 3-methyl-2-oxobutanoate + (6R)-5,10-methylene-5,6,7,8-tetrahydrofolate + H2O = 2-dehydropantoate + (6S)-5,6,7,8-tetrahydrofolate. It participates in cofactor biosynthesis; (R)-pantothenate biosynthesis; (R)-pantoate from 3-methyl-2-oxobutanoate: step 1/2. In terms of biological role, catalyzes the reversible reaction in which hydroxymethyl group from 5,10-methylenetetrahydrofolate is transferred onto alpha-ketoisovalerate to form ketopantoate. The chain is 3-methyl-2-oxobutanoate hydroxymethyltransferase from Enterobacter sp. (strain 638).